The primary structure comprises 1207 residues: Ras GTPase-activating protein gap-2 (1207 aa).

Disordered regions lie at residues 1–29 (MKVI…SCTK) and 221–316 (RMSS…GSLR). One can recognise a PH domain in the interval 40-383 (PPICHGWLIV…WMENLRKTMN (344 aa)). Over residues 223-236 (SSSSHNLSTRLSGS) the composition is skewed to low complexity. 2 stretches are compositionally biased toward polar residues: residues 237–247 (TQNLNQPTNAY) and 286–297 (ASNTPSRDSSLY). Residues 374 to 490 (WMENLRKTMN…SSRSPVERWY (117 aa)) form the C2 domain. Residues 495–504 (SHSDSGTSRI) are compositionally biased toward polar residues. The tract at residues 495–516 (SHSDSGTSRIASALGGKSSSQE) is disordered. The 211-residue stretch at 579-789 (NLAKEFLCDL…HRMKDFLLRI (211 aa)) folds into the Ras-GAP domain. Disordered stretches follow at residues 856 to 903 (GVFH…LGRS), 923 to 1013 (FQTP…SSSS), 1086 to 1107 (ATGG…RASR), and 1163 to 1207 (LKSK…VVPN). Polar residues-rich tracts occupy residues 862–876 (MVQQ…SPQQ) and 891–903 (TPPT…LGRS). Positions 939 to 953 (TGTSSSRTSDKTTSS) are enriched in low complexity. Residues 955-972 (EIRDDTDSDFELREDRGR) show a composition bias toward basic and acidic residues. Residues 985-1013 (ASPSSSQQASSGYLSNNPSRSSYSNSSSS) show a composition bias toward low complexity. Residues 1181-1207 (SGASEDSYDSLSSLDRPSRQSLVVVPN) show a composition bias toward low complexity.

In terms of tissue distribution, mainly expressed in gonads and vulval cells. Isoform c in expressed in pharyngeal epithelial cells and several rectal/blast cells in the tail region. Isoform f is weakly expressed in four cells symmetrically located in the vulval region. Isoform g is strongly expressed in the pharyngeal muscle cells m6 in addition to several cells in the tail region.

It is found in the cytoplasm. Its function is as follows. GTPase-activating protein, which acts as a negative regulator for the member of the Ras family let-60. Probably decreases the signaling activity of Ras by stimulating its intrinsic GTPase activity, thereby lowering the levels of GTP-bound, active Ras. The different isoforms may play a distinct role in specific tissues. The sequence is that of Ras GTPase-activating protein gap-2 (gap-2) from Caenorhabditis elegans.